The sequence spans 244 residues: MSTNPKPAYRRVLLKLSGEALQGSEGFGIDPAVLERMAQEIKELVELGVQVGLVIGGGNLFRGAGLAKAGMNRVVGDHMGMLATVMNGLAMRDALHRAYVNARLMSAISLQGVCDSYSWAEAISQLRAGKVVIFSAGTGNPFFTTDSAACLRGIEIEADVVLKATKVDGVFNEDPVKNPDAVLYHELSYNEVLEKELKVMDLAAFTLARDHDLPIRVFNMNKPGALRRVIMGEPEGTLIHHIGK.

An ATP-binding site is contributed by 15 to 18 (KLSG). The involved in allosteric activation by GTP stretch occupies residues 23 to 28 (GSEGFG). Position 57 (Gly57) interacts with UMP. Residues Gly58 and Arg62 each coordinate ATP. UMP-binding positions include Asp77 and 138–145 (TGNPFFTT). Residues Thr165, Phe171, and Asp174 each contribute to the ATP site.

It belongs to the UMP kinase family. As to quaternary structure, homohexamer.

The protein localises to the cytoplasm. The catalysed reaction is UMP + ATP = UDP + ADP. Its pathway is pyrimidine metabolism; CTP biosynthesis via de novo pathway; UDP from UMP (UMPK route): step 1/1. With respect to regulation, allosterically activated by GTP. Inhibited by UTP. In terms of biological role, catalyzes the reversible phosphorylation of UMP to UDP. The protein is Uridylate kinase of Aeromonas salmonicida (strain A449).